We begin with the raw amino-acid sequence, 841 residues long: Probable outer membrane protein pmp2 (841 aa).

A signal peptide spans 1 to 24 (MKIPLRFLLISLVPTLSMSNLLGA). An Autotransporter domain is found at 537 to 841 (GAPYEKRFWV…NVDAGSKIKF (305 aa)).

Belongs to the PMP outer membrane protein family.

The protein resides in the secreted. The protein localises to the cell wall. It localises to the cell outer membrane. The chain is Probable outer membrane protein pmp2 (pmp2) from Chlamydia pneumoniae (Chlamydophila pneumoniae).